Reading from the N-terminus, the 362-residue chain is Glutaminase-asparaginase (362 aa).

A signal peptide spans 1–25 (MNAALKTFAPSALALLLILPSSASA). The region spanning 35-362 (ANVVILATGG…KELQRIFWEY (328 aa)) is the Asparaginase/glutaminase domain. Thr-45 (acyl-ester intermediate) is an active-site residue. Substrate is bound by residues Ser-92 and 125 to 126 (TD).

It belongs to the asparaginase 1 family. Homotetramer.

Its subcellular location is the periplasm. The enzyme catalyses L-glutamine + H2O = L-glutamate + NH4(+). It catalyses the reaction L-asparagine + H2O = L-aspartate + NH4(+). This is Glutaminase-asparaginase (ansB) from Pseudomonas putida (strain ATCC 47054 / DSM 6125 / CFBP 8728 / NCIMB 11950 / KT2440).